The sequence spans 337 residues: Large ribosomal subunit protein uL3 (337 aa).

The disordered stretch occupies residues Met1–Ser29.

Belongs to the universal ribosomal protein uL3 family. As to quaternary structure, part of the 50S ribosomal subunit. Forms a cluster with proteins L14 and L24e.

In terms of biological role, one of the primary rRNA binding proteins, it binds directly near the 3'-end of the 23S rRNA, where it nucleates assembly of the 50S subunit. The chain is Large ribosomal subunit protein uL3 from Methanothermobacter thermautotrophicus (strain ATCC 29096 / DSM 1053 / JCM 10044 / NBRC 100330 / Delta H) (Methanobacterium thermoautotrophicum).